The sequence spans 288 residues: Diaminopimelate epimerase (288 aa).

Residues Asn13, Gln46, and Asn66 each coordinate substrate. Cys75 (proton donor) is an active-site residue. Residues 76-77 (GN), Asn166, Asn199, and 217-218 (ER) contribute to the substrate site. The active-site Proton acceptor is the Cys226. 227 to 228 (GT) provides a ligand contact to substrate.

This sequence belongs to the diaminopimelate epimerase family. In terms of assembly, homodimer.

Its subcellular location is the cytoplasm. It catalyses the reaction (2S,6S)-2,6-diaminopimelate = meso-2,6-diaminopimelate. It functions in the pathway amino-acid biosynthesis; L-lysine biosynthesis via DAP pathway; DL-2,6-diaminopimelate from LL-2,6-diaminopimelate: step 1/1. Catalyzes the stereoinversion of LL-2,6-diaminopimelate (L,L-DAP) to meso-diaminopimelate (meso-DAP), a precursor of L-lysine and an essential component of the bacterial peptidoglycan. The protein is Diaminopimelate epimerase of Cupriavidus pinatubonensis (strain JMP 134 / LMG 1197) (Cupriavidus necator (strain JMP 134)).